Reading from the N-terminus, the 513-residue chain is Serine/threonine-protein kinase UL13 homolog (513 aa).

Residues 1–27 (MDTESKNKKTTNGGENSNCSHSTRTPD) are disordered. Positions 10–23 (TTNGGENSNCSHST) are enriched in polar residues. The region spanning 145 to 487 (KEMPIYAGSG…FDSLNIFPYL (343 aa)) is the Protein kinase domain. ATP contacts are provided by residues 151–159 (AGSGSYGVV) and K170. D268 functions as the Proton acceptor in the catalytic mechanism.

The protein belongs to the protein kinase superfamily. Ser/Thr protein kinase family. Autophosphorylated.

The protein localises to the virion tegument. The protein resides in the host nucleus. The enzyme catalyses L-seryl-[protein] + ATP = O-phospho-L-seryl-[protein] + ADP + H(+). The catalysed reaction is L-threonyl-[protein] + ATP = O-phospho-L-threonyl-[protein] + ADP + H(+). Multifunctional serine/threonine kinase that plays a role in several processes including egress of virus particles from the nucleus, modulation of the actin cytoskeleton and regulation of viral and cellular gene expression. This is Serine/threonine-protein kinase UL13 homolog (MDV025) from Gallid herpesvirus 2 (strain Chicken/Md5/ATCC VR-987) (GaHV-2).